The following is a 436-amino-acid chain: GTPase Der (436 aa).

EngA-type G domains are found at residues 4–167 and 175–351; these read PTVA…PVEE and IRFS…ESQN. Residues 10 to 17, 57 to 61, 119 to 122, 181 to 188, 229 to 233, and 294 to 297 contribute to the GTP site; these read GRPNVGKS, DTGGI, NKVD, DTAGM, and NKWD. The 85-residue stretch at 352–436 folds into the KH-like domain; that stretch reads KRIPSAVLND…PINLIARKRK (85 aa).

This sequence belongs to the TRAFAC class TrmE-Era-EngA-EngB-Septin-like GTPase superfamily. EngA (Der) GTPase family. Associates with the 50S ribosomal subunit.

In terms of biological role, GTPase that plays an essential role in the late steps of ribosome biogenesis. The sequence is that of GTPase Der from Streptococcus agalactiae serotype Ia (strain ATCC 27591 / A909 / CDC SS700).